The primary structure comprises 298 residues: Riboflavin transporter (298 aa).

Helical transmembrane passes span 8 to 28 (LQGA…NSVA), 35 to 55 (FGLP…VVIL), 79 to 99 (VFLA…PVPI), 101 to 121 (QGIA…GLWL), 125 to 145 (VGMA…IILE), 151 to 171 (FNLA…YSLM), 184 to 204 (MVVY…LPDW), 211 to 231 (TVWL…WAIA), and 258 to 278 (WLVF…IIVL). EamA domains lie at 10-144 (GALW…MIIL) and 156-284 (LLPV…AFIT).

This sequence belongs to the drug/metabolite transporter (DMT) superfamily. 10 TMS drug/metabolite exporter (DME) (TC 2.A.7.3) family.

Its subcellular location is the cell membrane. Its function is as follows. Transports riboflavin into the cell. This chain is Riboflavin transporter, found in Vibrio cholerae serotype O1 (strain ATCC 39315 / El Tor Inaba N16961).